The following is a 484-amino-acid chain: MSERIRVRYAPSPTGYLHIGNARTALFNYLFAKHYDGDFVVRIEDTDSKRNLEDGESSQFDNLKWLGLDWDESIDKDKGYGPYRQSERGDIYNPLIQQLLDEDKAYKCYMTEEELEKEREDQIARGEMPRYGGQHAHLTEEERQQFEAEGRRPSIRFRVPQDQTYTFNDMVKGEISFDSNNIGDWVIVKKDGIPTYNFAVAIDDYYMGISDVIRGDDHVSNTPKQLMIYEAFGWEAPRFGHMSLIVNEERKKLSKRDGQILQFIEQYRDLGYLPEALFNFITLLGWSPEGEEEIFSKEEFIKIFDEKRLSKSPAMFDRQKLAWVNNQYMKTKDTDTVFELALPHLIKANLIPESPSEDDKEWGRKLVALYQKEMSYAGEIVPLSEMFFHEMPELGEEEQEVINGEQVPELMTHLYGKLEALEPFEAADIKKTIKEVQKETGIKGKQLFMPIRVAVTGQMHGPELPNTIEVLGKDKVLSRLKKFV.

A 'HIGH' region motif is present at residues 11–21 (PSPTGYLHIGN). A 'KMSKS' region motif is present at residues 252 to 256 (KLSKR). Residue Lys255 coordinates ATP.

Belongs to the class-I aminoacyl-tRNA synthetase family. Glutamate--tRNA ligase type 1 subfamily. In terms of assembly, monomer.

The protein resides in the cytoplasm. The catalysed reaction is tRNA(Glu) + L-glutamate + ATP = L-glutamyl-tRNA(Glu) + AMP + diphosphate. In terms of biological role, catalyzes the attachment of glutamate to tRNA(Glu) in a two-step reaction: glutamate is first activated by ATP to form Glu-AMP and then transferred to the acceptor end of tRNA(Glu). The sequence is that of Glutamate--tRNA ligase from Staphylococcus haemolyticus (strain JCSC1435).